Here is a 135-residue protein sequence, read N- to C-terminus: Large ribosomal subunit protein uL16c (135 aa).

The protein belongs to the universal ribosomal protein uL16 family. Part of the 50S ribosomal subunit.

Its subcellular location is the plastid. The protein localises to the chloroplast. The polypeptide is Large ribosomal subunit protein uL16c (Olimarabidopsis pumila (Dwarf rocket)).